The sequence spans 2113 residues: Ninein (2113 aa).

EF-hand domains lie at 8–43 and 42–77; these read QHEA…LCLE and LEDV…ILSR. Serine 152 bears the Phosphoserine mark. EF-hand domains lie at 182-217 and 219-252; these read WIEE…YGLQ and VDGA…TGKS. GTP is bound at residue 245 to 252; that stretch reads GLFKTGKS. Serine 269 bears the Phosphoserine mark. 300 to 304 contributes to the GTP binding site; the sequence is DGMGQ. One can recognise an EF-hand 5 domain in the interval 317 to 352; the sequence is EGIENSQEILKALDFSLDGNINLTELTLALENELLV. Residues 358–570 are a coiled coil; it reads HQAALASFKA…YQAQGRVLRL (213 aa). Residue 420 to 423 coordinates GTP; the sequence is RKLD. The interval 578-599 is disordered; it reads EELDGHSGGIEPDQGPGSEECN. 4 coiled-coil regions span residues 620–926, 958–1008, 1175–1323, and 1425–1806; these read RDLC…ESQH, EQLA…STEI, EDTR…MEKV, and AALL…IDKD. Positions 798–1495 are important for interaction with CEP170; the sequence is EMETECNRRV…QDLQITCGEM (698 aa). Serine 1540 and serine 1826 each carry phosphoserine. Coiled coils occupy residues 1852–1910 and 1971–2093; these read VQNT…KEQS and REQF…IASL. Disordered regions lie at residues 1899 to 1922 and 1988 to 2008; these read KREC…MGSL and SQHL…PQGN. Residues 1988 to 1999 show a composition bias toward basic and acidic residues; it reads SQHLQEELENRT.

As to quaternary structure, homooligomer. Interacts with GSK3B/GSK3-beta via its C-terminal domain. Interacts with C14ORF166, such interaction may prevent its phosphorylation by GSK3B. Interacts with AUNIP (via N-terminus). Identified in a complex with AUNIP and AURKA. Interacts with CCDC120. Interacts (via C-terminus) with CEP250. Interacts with CEP170. Interacts (via N-terminus) with the gamma-tubulin ring complex component TUBGCP3. Interacts with gamma-tubulin. Isoform 4 does not interact with CEP170 or CEP250. In terms of processing, phosphorylated by AURKA/Aurora kinase A and PKA kinases but not CK2 or AURKB/Aurora kinase B. Widely expressed. Highly expressed in spleen, bone marrow and skin. Weakly expressed in liver and small intestine. Expressed in brain.

It localises to the cytoplasm. It is found in the cytoskeleton. The protein resides in the microtubule organizing center. The protein localises to the centrosome. Its subcellular location is the centriole. Centrosomal protein required for the positioning and anchorage of the microtubule minus-end in epithelial cells. May also act as a centrosome maturation factor. May play a role in microtubule nucleation, by recruiting the gamma-tubulin ring complex to the centrosome. Overexpression does not perturb nucleation or elongation of microtubules but suppresses release of microtubules. Required for centriole organization and microtubule anchoring at the mother centriole. The sequence is that of Ninein from Mus musculus (Mouse).